Reading from the N-terminus, the 57-residue chain is Small polypeptide DEVIL 20 (57 aa).

Asn5 carries an N-linked (GlcNAc...) asparagine glycan. Residues 16 to 47 (TFKAKCSHMVRKQRAKFYILGRCLAMLVCGRG) are required for DVL/RTFL small polypeptide activity. A helical membrane pass occupies residues 29–45 (RAKFYILGRCLAMLVCG).

This sequence belongs to the DVL/RTFL small polypeptides family.

It localises to the cell membrane. In terms of biological role, small polypeptide acting as a regulatory molecule which coordinates cellular responses required for differentiation, growth and development, probably by restricting polar cell proliferation in lateral organs and coordinating socket cell recruitment and differentiation at trichome sites. The chain is Small polypeptide DEVIL 20 from Arabidopsis thaliana (Mouse-ear cress).